The following is a 623-amino-acid chain: MLGEDEGNTVLEKGNNPSVKQGEVGAVFIVPKILIREHERVILKQILQILDQDELVQPPLDKFPYKKLELPKYIDELKTRDATNTSYKMIQLDAYGEKKVGSNGELFGGRHYLFNTFTFTAHMGVLLVLLQDVIKVLYQSNATHDEDEFIVQHDQILVMETSEEQTKFLAKNGVIPEESKGSFKYITARSAFVEFGASVIAGGQRIVDDYWESLAKKQNLSSHQRVFKLSTNLISKISLLRPSFQNNRISNANEISANTNNTCTISTSKFESQYPIVTEQPSAEIREAYIENFAKGEHISAIVPGQSISGTLELSAQFRVPRYHSKNSFQQALQMKAMDIPIGRHEELLAQYESQAPDGSASISLPNHIPSVNPSNKPIKRMLSSILDINVSSSKNKKSEENEMIKPMNKGQHKNNTSLNINGWKFESLPLKSAENSGKQQYYRGLPLYEKNTLLERLKQLTPNEIKELEHLHDAVFVNTGLQNVRKVRTKKWKKYWQYKAGIPIGLKRSQLDEFKNKYLKDVLAQTSVTTNFNEITNTDETITTKRVPNPNFLGNCNIKDFKPPYIYSHVNKVPQNVAGDKTAVKLDTEVKNTNANPVVATDPVAAKPDNLANFSNEVAMNN.

The protein belongs to the RSC7/SWP82 family. SWP82 subfamily. As to quaternary structure, interacts with SWI3 and SNF12. Component of the SWI/SNF global transcription activator complex. The 1.14 MDa SWI/SNF complex is composed of 11 different subunits: one copy each of SWI1, SNF2/SWI2, SNF5, SNF12/SWP73, ARP7/SWP61, ARP9/SWP59; two copies each of SWI3, SNF6, SNF11, SWP82; and three copies of TAF14/SWP29.

It is found in the nucleus. Its function is as follows. Involved in transcriptional activation. Component of the SWI/SNF complex, an ATP-dependent chromatin remodeling complex, which is required for the positive and negative regulation of gene expression of a large number of genes. It changes chromatin structure by altering DNA-histone contacts within a nucleosome, leading eventually to a change in nucleosome position, thus facilitating or repressing binding of gene-specific transcription factors. The protein is SWI/SNF global transcription activator complex subunit SWP82 (SWP82) of Saccharomyces cerevisiae (strain ATCC 204508 / S288c) (Baker's yeast).